Consider the following 655-residue polypeptide: Chaperone protein DnaK 3 (655 aa).

Position 197 is a phosphothreonine; by autocatalysis (threonine 197).

This sequence belongs to the heat shock protein 70 family.

Functionally, acts as a chaperone. This chain is Chaperone protein DnaK 3, found in Synechococcus sp. (strain ATCC 27144 / PCC 6301 / SAUG 1402/1) (Anacystis nidulans).